Here is a 120-residue protein sequence, read N- to C-terminus: Large ribosomal subunit protein uL18 (120 aa).

It belongs to the universal ribosomal protein uL18 family. As to quaternary structure, part of the 50S ribosomal subunit; part of the 5S rRNA/L5/L18/L25 subcomplex. Contacts the 5S and 23S rRNAs.

This is one of the proteins that bind and probably mediate the attachment of the 5S RNA into the large ribosomal subunit, where it forms part of the central protuberance. The chain is Large ribosomal subunit protein uL18 from Macrococcus caseolyticus (strain JCSC5402) (Macrococcoides caseolyticum).